We begin with the raw amino-acid sequence, 625 residues long: Chaperone protein HtpG (625 aa).

An a; substrate-binding region spans residues 1 to 341 (MGKRKFKAES…SEDLSLNISR (341 aa)). The tract at residues 342–551 (EMLQHDRQLK…DGEISLEMEK (210 aa)) is b. Residues 552–625 (IINAMPDDQQ…FTNDICKVMV (74 aa)) are c.

Belongs to the heat shock protein 90 family. As to quaternary structure, homodimer.

It is found in the cytoplasm. Molecular chaperone. Has ATPase activity. This is Chaperone protein HtpG from Oceanobacillus iheyensis (strain DSM 14371 / CIP 107618 / JCM 11309 / KCTC 3954 / HTE831).